Here is a 225-residue protein sequence, read N- to C-terminus: MTAPASLQAKAVGIGMTSQRVRDRLVERLRECGIQDERVLTTIRIVPRHLFIDEALALRAYEDTALPIGHGQTISQPWVVARMTEAVMQVAPKKILEIGTGSGYQSAILASLGLEVYTIERIGKLLRQARKRFRQLGIKIRSKHDDGSIGWTEHAPYNAILVTAAAPTLIDTLIEQLAIGGRLVAPVGTASEQALVQLTRTIDGNITHEILEPVTFVSLLPGMLD.

Ser75 is an active-site residue.

The protein belongs to the methyltransferase superfamily. L-isoaspartyl/D-aspartyl protein methyltransferase family.

Its subcellular location is the cytoplasm. The enzyme catalyses [protein]-L-isoaspartate + S-adenosyl-L-methionine = [protein]-L-isoaspartate alpha-methyl ester + S-adenosyl-L-homocysteine. In terms of biological role, catalyzes the methyl esterification of L-isoaspartyl residues in peptides and proteins that result from spontaneous decomposition of normal L-aspartyl and L-asparaginyl residues. It plays a role in the repair and/or degradation of damaged proteins. The sequence is that of Protein-L-isoaspartate O-methyltransferase from Xylella fastidiosa (strain 9a5c).